Reading from the N-terminus, the 83-residue chain is Sulfur carrier protein TusA (83 aa).

Residue cysteine 19 is the Cysteine persulfide intermediate of the active site.

This sequence belongs to the sulfur carrier protein TusA family.

The protein resides in the cytoplasm. Its function is as follows. Sulfur carrier protein which probably makes part of a sulfur-relay system. The chain is Sulfur carrier protein TusA from Aliivibrio salmonicida (strain LFI1238) (Vibrio salmonicida (strain LFI1238)).